The primary structure comprises 714 residues: Calpain-1 catalytic subunit (714 aa).

Positions 55-354 constitute a Calpain catalytic domain; the sequence is LFRDEAFPPV…FTRLEICNLT (300 aa). 2 residues coordinate Ca(2+): Gln109 and Asp114. Catalysis depends on residues Cys115, His272, and Asn296. Ca(2+)-binding residues include Asn316, Asp318, and Asp323. Thr354 carries the post-translational modification Phosphothreonine. Positions 355 to 526 are domain III; that stretch reads PDALKSRTIR…KSAGTAELDD (172 aa). The interval 527–542 is linker; it reads QIQANLPDEQVLSEEE. EF-hand domains lie at 541 to 576, 585 to 618, 615 to 650, and 680 to 714; these read EEID…IISK, FSLE…NRIR, NRIR…AGFK, and VRLE…TMFA. The domain IV stretch occupies residues 543–713; sequence IDENFKALFR…LFKWLQLTMF (171 aa). Ca(2+) is bound by residues Asp598, Asp600, Asn602, Lys604, Glu609, Asp628, Asp630, Ser632, Ser634, and Glu639.

It belongs to the peptidase C2 family. In terms of assembly, forms a heterodimer with a small (regulatory) subunit CAPNS1. Ca(2+) is required as a cofactor. Post-translationally, undergoes calcium-induced successive autoproteolytic cleavages that generate a membrane-bound 78 kDa active form and an intracellular 75 kDa active form. Calpastatin reduces with high efficiency the transition from 78 kDa to 75 kDa calpain forms.

The protein localises to the cytoplasm. The protein resides in the cell membrane. It catalyses the reaction Broad endopeptidase specificity.. Activated by micromolar concentrations of calcium and inhibited by calpastatin. Calcium-regulated non-lysosomal thiol-protease which catalyzes limited proteolysis of substrates involved in cytoskeletal remodeling and signal transduction. Proteolytically cleaves CTBP1. Cleaves and activates caspase-7 (CASP7). The sequence is that of Calpain-1 catalytic subunit from Pongo abelii (Sumatran orangutan).